Here is a 343-residue protein sequence, read N- to C-terminus: Fc receptor-like protein 1 (343 aa).

An N-terminal signal peptide occupies residues 1 to 16; that stretch reads MLPWLLLLICALPCEP. Ig-like C2-type domains follow at residues 17–109 and 117–200; these read AGIS…VSIH and PVLT…EVVA. Residues 17 to 219 lie on the Extracellular side of the membrane; sequence AGISDVSLKT…PTENGISHLS (203 aa). N-linked (GlcNAc...) asparagine glycosylation occurs at Asn51. Cys138 and Cys185 are oxidised to a cystine. N-linked (GlcNAc...) asparagine glycosylation occurs at Asn202. Residues 220 to 240 traverse the membrane as a helical segment; the sequence is LGLTGWLLGCLSPITMALIFC. Topologically, residues 241–343 are cytoplasmic; sequence YWLKRKIGRQ…IAHMDYEDAM (103 aa). Positions 251–278 are disordered; the sequence is SEDPVRSPPQTVLQGSTYPKSPDSRQPE. Residues 258–269 show a composition bias toward polar residues; that stretch reads PPQTVLQGSTYP. Short sequence motifs (ITIM motif) lie at residues 266–271, 279–284, and 291–296; these read STYPKS, PLYENV, and EVYSLV. A Phosphotyrosine modification is found at Tyr281. A Phosphotyrosine modification is found at Tyr297. 2 consecutive short sequence motifs (ITIM motif) follow at residues 325–330 and 337–342; these read GLYSKP and MDYEDA.

As to quaternary structure, interacts with ABL1. Interacts with GRB2 and SOS1. Interacts with SHIP-1/INPP5D. Phosphorylated on C-terminal region upon BCR ligation leading to recruitment of ABL1. Widely expressed. Expressed in B-cells at the various stages of differentiation.

The protein resides in the cell membrane. Functionally, may function as an activating coreceptor in B-cells. May function in B-cells activation and differentiation. This Mus musculus (Mouse) protein is Fc receptor-like protein 1 (Fcrl1).